The primary structure comprises 156 residues: Cellulose synthase operon protein D (156 aa).

It functions in the pathway glycan metabolism; bacterial cellulose biosynthesis. In terms of biological role, may have a major role in the perfection of crystallization, involved either in the pore structure itself or in the organization of the pores within the linear array of terminal synthesizing complexes (TCs). This is Cellulose synthase operon protein D (acsD) from Komagataeibacter xylinus (Gluconacetobacter xylinus).